A 915-amino-acid chain; its full sequence is Protein translocase subunit SecA (915 aa).

Residues Gln87, 105–109, and Asp512 contribute to the ATP site; that span reads GEGKT. Residues 849–864 are compositionally biased toward low complexity; that stretch reads AAQQQARQAPLPNAPA. Positions 849–915 are disordered; it reads AAQQQARQAP…CHGSRAKDHA (67 aa). Basic and acidic residues predominate over residues 876 to 891; sequence PEEKVARVAAERHIGR. Cys895, Cys897, Cys906, and His907 together coordinate Zn(2+).

It belongs to the SecA family. In terms of assembly, monomer and homodimer. Part of the essential Sec protein translocation apparatus which comprises SecA, SecYEG and auxiliary proteins SecDF-YajC and YidC. Zn(2+) serves as cofactor.

The protein resides in the cell inner membrane. It localises to the cytoplasm. It catalyses the reaction ATP + H2O + cellular proteinSide 1 = ADP + phosphate + cellular proteinSide 2.. Its function is as follows. Part of the Sec protein translocase complex. Interacts with the SecYEG preprotein conducting channel. Has a central role in coupling the hydrolysis of ATP to the transfer of proteins into and across the cell membrane, serving both as a receptor for the preprotein-SecB complex and as an ATP-driven molecular motor driving the stepwise translocation of polypeptide chains across the membrane. The protein is Protein translocase subunit SecA of Actinobacillus succinogenes (strain ATCC 55618 / DSM 22257 / CCUG 43843 / 130Z).